Here is a 281-residue protein sequence, read N- to C-terminus: UDP-N-acetylenolpyruvoylglucosamine reductase (281 aa).

Residues 17–180 (VGGKAKKLII…LSATFKFDNG (164 aa)) enclose the FAD-binding PCMH-type domain. Arg159 is an active-site residue. Ser206 serves as the catalytic Proton donor. Glu276 is an active-site residue.

The protein belongs to the MurB family. It depends on FAD as a cofactor.

The protein resides in the cytoplasm. It carries out the reaction UDP-N-acetyl-alpha-D-muramate + NADP(+) = UDP-N-acetyl-3-O-(1-carboxyvinyl)-alpha-D-glucosamine + NADPH + H(+). Its pathway is cell wall biogenesis; peptidoglycan biosynthesis. Cell wall formation. The polypeptide is UDP-N-acetylenolpyruvoylglucosamine reductase (Fusobacterium nucleatum subsp. nucleatum (strain ATCC 25586 / DSM 15643 / BCRC 10681 / CIP 101130 / JCM 8532 / KCTC 2640 / LMG 13131 / VPI 4355)).